The following is a 1154-amino-acid chain: PDZ domain-containing protein 8 (1154 aa).

Residues 2–24 (GLLLMILASAVLGSFLTLLAQFF) traverse the membrane as a helical segment. The interval 66 to 90 (DEEPSGAAPEGGATPTAAPETPAPP) is disordered. A compositionally biased stretch (low complexity) spans 70 to 85 (SGAAPEGGATPTAAPE). Positions 91-294 (TRETCYFLNA…LPNYKIRFKP (204 aa)) constitute an SMP-LTD domain. Residues 366 to 449 (TVELIKGNLQ…RVLVYYERPV (84 aa)) form the PDZ domain. Serine 496, serine 521, and serine 538 each carry phosphoserine. Residues 548 to 612 (GSHPLPPKIQ…SADAPNQAEP (65 aa)) form a disordered region. The Phorbol-ester/DAG-type zinc-finger motif lies at 840–891 (KHSFQDTQFQNPTWCDYCKKKVWTKAASQCMFCAYVCHKKCQEKCLAETSVC). The tract at residues 955 to 999 (RLSEPGTDLVEPSPKHTPNTSDNEGSDTEVCGPNSPSKRGNSTGI) is disordered. A phosphoserine mark is found at serine 967 and serine 980. The span at 988-998 (NSPSKRGNSTG) shows a compositional bias: polar residues. A coiled-coil region spans residues 1028 to 1063 (PTEERIQKLEFMLDKLQNEIDQELEHNNSLVREEKE). Over residues 1132 to 1144 (SQLIDSQPFSSIS) the composition is skewed to polar residues. The segment at 1132 to 1154 (SQLIDSQPFSSISDDLFGPSESV) is disordered.

In terms of assembly, interacts with MSN. As to quaternary structure, (Microbial infection) Interacts with HIV-1 Gag polyprotein p55.

The protein resides in the endoplasmic reticulum membrane. Molecular tethering protein that connects endoplasmic reticulum and mitochondria membranes. PDZD8-dependent endoplasmic reticulum-mitochondria membrane tethering is essential for endoplasmic reticulum-mitochondria Ca(2+) transfer. In neurons, involved in the regulation of dendritic Ca(2+) dynamics by regulating mitochondrial Ca(2+) uptake in neurons. Plays an indirect role in the regulation of cell morphology and cytoskeletal organization. May inhibit herpes simplex virus 1 infection at an early stage. The polypeptide is PDZ domain-containing protein 8 (Homo sapiens (Human)).